The following is a 400-amino-acid chain: Acetate kinase (400 aa).

Asparagine 7 serves as a coordination point for Mg(2+). Lysine 14 contributes to the ATP binding site. Substrate is bound at residue arginine 91. The active-site Proton donor/acceptor is the aspartate 148. Residues 208–212 (HIGNG), 283–285 (DFR), and 332–336 (GIGEH) contribute to the ATP site. Glutamate 387 is a Mg(2+) binding site.

This sequence belongs to the acetokinase family. Homodimer. The cofactor is Mg(2+). It depends on Mn(2+) as a cofactor.

The protein resides in the cytoplasm. It carries out the reaction acetate + ATP = acetyl phosphate + ADP. Its pathway is metabolic intermediate biosynthesis; acetyl-CoA biosynthesis; acetyl-CoA from acetate: step 1/2. In terms of biological role, catalyzes the formation of acetyl phosphate from acetate and ATP. Can also catalyze the reverse reaction. The sequence is that of Acetate kinase from Clostridium beijerinckii (strain ATCC 51743 / NCIMB 8052) (Clostridium acetobutylicum).